We begin with the raw amino-acid sequence, 152 residues long: 3-hydroxyacyl-[acyl-carrier-protein] dehydratase FabZ (152 aa).

Histidine 54 is an active-site residue.

This sequence belongs to the thioester dehydratase family. FabZ subfamily.

The protein resides in the cytoplasm. It carries out the reaction a (3R)-hydroxyacyl-[ACP] = a (2E)-enoyl-[ACP] + H2O. Its function is as follows. Involved in unsaturated fatty acids biosynthesis. Catalyzes the dehydration of short chain beta-hydroxyacyl-ACPs and long chain saturated and unsaturated beta-hydroxyacyl-ACPs. The polypeptide is 3-hydroxyacyl-[acyl-carrier-protein] dehydratase FabZ (Shewanella woodyi (strain ATCC 51908 / MS32)).